The following is a 353-amino-acid chain: tRNA-specific 2-thiouridylase MnmA 2 (353 aa).

Residues alanine 9–serine 16 and methionine 35 contribute to the ATP site. The active-site Nucleophile is the cysteine 98. A disulfide bond links cysteine 98 and cysteine 194. Position 122 (glycine 122) interacts with ATP. The tract at residues lysine 144–glutamine 146 is interaction with tRNA. Cysteine 194 functions as the Cysteine persulfide intermediate in the catalytic mechanism. The interaction with tRNA stretch occupies residues arginine 300–tyrosine 301.

Belongs to the MnmA/TRMU family.

The protein resides in the cytoplasm. It carries out the reaction S-sulfanyl-L-cysteinyl-[protein] + uridine(34) in tRNA + AH2 + ATP = 2-thiouridine(34) in tRNA + L-cysteinyl-[protein] + A + AMP + diphosphate + H(+). Catalyzes the 2-thiolation of uridine at the wobble position (U34) of tRNA, leading to the formation of s(2)U34. In Clostridium botulinum (strain ATCC 19397 / Type A), this protein is tRNA-specific 2-thiouridylase MnmA 2.